Consider the following 229-residue polypeptide: Ribulose-phosphate 3-epimerase (229 aa).

Residue Ser-12 coordinates substrate. A divalent metal cation-binding residues include His-37, Asp-39, and His-70. Asp-39 acts as the Proton acceptor in catalysis. Residues His-70, Gly-146–Gly-149, Asp-181–Gly-183, and Ala-203–Ser-204 contribute to the substrate site. Residue Asp-181 coordinates a divalent metal cation. The active-site Proton donor is the Asp-181.

Belongs to the ribulose-phosphate 3-epimerase family. A divalent metal cation serves as cofactor.

The catalysed reaction is D-ribulose 5-phosphate = D-xylulose 5-phosphate. It functions in the pathway carbohydrate degradation. Functionally, catalyzes the reversible epimerization of D-ribulose 5-phosphate to D-xylulose 5-phosphate. The chain is Ribulose-phosphate 3-epimerase from Chlamydia pneumoniae (Chlamydophila pneumoniae).